Consider the following 385-residue polypeptide: Chaperone protein DnaJ (385 aa).

Residues 5-70 form the J domain; sequence DYYEVLGVSK…DKKAAYDRFG (66 aa). Residues 143 to 221 form a CR-type zinc finger; the sequence is GLSKQITVPS…CGGAGRQEKD (79 aa). Zn(2+) is bound by residues cysteine 156, cysteine 159, cysteine 173, cysteine 176, cysteine 195, cysteine 198, cysteine 209, and cysteine 212. CXXCXGXG motif repeat units lie at residues 156–163, 173–180, 195–202, and 209–216; these read CSSCDGTG, CPTCSGMG, CPTCNGMG, and CRTCGGAG. Residues 299 to 323 form a disordered region; it reads GGRSRVRVPEGSQSGRQMRLRGKGM.

The protein belongs to the DnaJ family. In terms of assembly, homodimer. Requires Zn(2+) as cofactor.

The protein resides in the cytoplasm. Functionally, participates actively in the response to hyperosmotic and heat shock by preventing the aggregation of stress-denatured proteins and by disaggregating proteins, also in an autonomous, DnaK-independent fashion. Unfolded proteins bind initially to DnaJ; upon interaction with the DnaJ-bound protein, DnaK hydrolyzes its bound ATP, resulting in the formation of a stable complex. GrpE releases ADP from DnaK; ATP binding to DnaK triggers the release of the substrate protein, thus completing the reaction cycle. Several rounds of ATP-dependent interactions between DnaJ, DnaK and GrpE are required for fully efficient folding. Also involved, together with DnaK and GrpE, in the DNA replication of plasmids through activation of initiation proteins. This Jannaschia sp. (strain CCS1) protein is Chaperone protein DnaJ.